Reading from the N-terminus, the 130-residue chain is Small ribosomal subunit protein uS9 (130 aa).

This sequence belongs to the universal ribosomal protein uS9 family.

The protein is Small ribosomal subunit protein uS9 of Burkholderia multivorans (strain ATCC 17616 / 249).